An 869-amino-acid chain; its full sequence is Bifunctional uridylyltransferase/uridylyl-removing enzyme (869 aa).

Positions 1 to 332 (MTDTPAERPD…QFDGEATPEP (332 aa)) are uridylyltransferase. The uridylyl-removing stretch occupies residues 333–691 (LGGGFSLRRG…RRAVPDNDAL (359 aa)). Residues 450-572 (VDQHTLMVLR…VGTRERLDYL (123 aa)) form the HD domain. ACT domains lie at 692 to 774 (EVFV…RAVP) and 798 to 869 (RISL…LDPV).

The protein belongs to the GlnD family. Mg(2+) serves as cofactor.

It carries out the reaction [protein-PII]-L-tyrosine + UTP = [protein-PII]-uridylyl-L-tyrosine + diphosphate. It catalyses the reaction [protein-PII]-uridylyl-L-tyrosine + H2O = [protein-PII]-L-tyrosine + UMP + H(+). Its activity is regulated as follows. Uridylyltransferase (UTase) activity is inhibited by glutamine, while glutamine activates uridylyl-removing (UR) activity. Its function is as follows. Modifies, by uridylylation and deuridylylation, the PII regulatory proteins (GlnB and homologs), in response to the nitrogen status of the cell that GlnD senses through the glutamine level. Under low glutamine levels, catalyzes the conversion of the PII proteins and UTP to PII-UMP and PPi, while under higher glutamine levels, GlnD hydrolyzes PII-UMP to PII and UMP (deuridylylation). Thus, controls uridylylation state and activity of the PII proteins, and plays an important role in the regulation of nitrogen assimilation and metabolism. This is Bifunctional uridylyltransferase/uridylyl-removing enzyme from Xanthomonas euvesicatoria pv. vesicatoria (strain 85-10) (Xanthomonas campestris pv. vesicatoria).